Consider the following 290-residue polypeptide: Metallo-beta-lactamase L1 type 3 (290 aa).

The signal sequence occupies residues 1–21 (MRSTLLAFALAVALPAAHTSA). Residues 22–33 (AEVPLPQLRAYT) constitute a propeptide that is removed on maturation. The Zn(2+) site is built by histidine 105, histidine 107, aspartate 109, histidine 110, and histidine 181. Aspartate 205 is a binding site for substrate. Cysteine 239 and cysteine 267 are joined by a disulfide. Histidine 246 is a Zn(2+) binding site.

The protein belongs to the metallo-beta-lactamase superfamily. Class-B beta-lactamase family. As to quaternary structure, homotetramer. Requires Zn(2+) as cofactor.

It localises to the periplasm. The catalysed reaction is a beta-lactam + H2O = a substituted beta-amino acid. Its activity is regulated as follows. Inhibited by Hg(2+) or Cu(2+), and by chelating agents such as EDTA and O-phenanthroline. Reduced enzymatic activity in presence of cobalt, nickel, cadmium, and manganese. Its function is as follows. Confers resistance to the different beta-lactams antibiotics (penicillin, cephalosporin and carbapenem) via the hydrolysis of the beta-lactam ring. The chain is Metallo-beta-lactamase L1 type 3 from Stenotrophomonas maltophilia (Pseudomonas maltophilia).